The sequence spans 135 residues: Small ribosomal subunit protein uS12 (135 aa).

The interval Met-1–Lys-20 is disordered. Over residues Arg-9–Lys-18 the composition is skewed to basic residues.

The protein belongs to the universal ribosomal protein uS12 family. As to quaternary structure, part of the 30S ribosomal subunit. Contacts proteins S8 and S17. May interact with IF1 in the 30S initiation complex.

Functionally, with S4 and S5 plays an important role in translational accuracy. Interacts with and stabilizes bases of the 16S rRNA that are involved in tRNA selection in the A site and with the mRNA backbone. Located at the interface of the 30S and 50S subunits, it traverses the body of the 30S subunit contacting proteins on the other side and probably holding the rRNA structure together. The combined cluster of proteins S8, S12 and S17 appears to hold together the shoulder and platform of the 30S subunit. In Lactobacillus acidophilus (strain ATCC 700396 / NCK56 / N2 / NCFM), this protein is Small ribosomal subunit protein uS12.